The primary structure comprises 171 residues: Large ribosomal subunit protein uL10 (171 aa).

The protein belongs to the universal ribosomal protein uL10 family. As to quaternary structure, part of the ribosomal stalk of the 50S ribosomal subunit. The N-terminus interacts with L11 and the large rRNA to form the base of the stalk. The C-terminus forms an elongated spine to which L12 dimers bind in a sequential fashion forming a multimeric L10(L12)X complex.

Functionally, forms part of the ribosomal stalk, playing a central role in the interaction of the ribosome with GTP-bound translation factors. This is Large ribosomal subunit protein uL10 from Corynebacterium diphtheriae (strain ATCC 700971 / NCTC 13129 / Biotype gravis).